Reading from the N-terminus, the 349-residue chain is Ethyl acetate hydrolase (349 aa).

Positions 67 to 300 (YIGEGRALDP…SHDQFFTVDD (234 aa)) constitute an AB hydrolase-1 domain. The active-site Nucleophile is the S139. Residues D293 and H322 contribute to the active site.

This sequence belongs to the AB hydrolase superfamily. Acetyl esterase family. Homodimer.

It carries out the reaction ethyl acetate + H2O = ethanol + acetate + H(+). Its function is as follows. Esterase that catalyzes the hydrolysis of ethyl acetate. Involved in the degradation of short chain methyl ketones (MEK) such as 2-butanone and 2-hexanone. In vitro, can also hydrolyze vinyl acetate, 4-nitrophenyl acetate, methyl acetate, propyl acetate, benzyl acetate and methyl propionate. The highest activities are obtained with acetic acid esters, but the alcohol group also plays an important role, as compounds with two carbon atoms in the alcohol moiety, i.e., vinyl and ethyl acetate, are by far the preferred substrates. In Pseudomonas veronii, this protein is Ethyl acetate hydrolase.